Consider the following 306-residue polypeptide: Putative S-adenosyl-L-methionine-dependent methyltransferase Mvan_1345 (306 aa).

S-adenosyl-L-methionine contacts are provided by residues aspartate 134 and 163 to 164 (DL).

This sequence belongs to the UPF0677 family.

In terms of biological role, exhibits S-adenosyl-L-methionine-dependent methyltransferase activity. This is Putative S-adenosyl-L-methionine-dependent methyltransferase Mvan_1345 from Mycolicibacterium vanbaalenii (strain DSM 7251 / JCM 13017 / BCRC 16820 / KCTC 9966 / NRRL B-24157 / PYR-1) (Mycobacterium vanbaalenii).